A 491-amino-acid polypeptide reads, in one-letter code: Nucleotidyltransferase MB21D2 (491 aa).

The segment covering 431–442 (RGSTTSIPSPQS) has biased composition (polar residues). The interval 431-452 (RGSTTSIPSPQSDGGDPNQPDD) is disordered. T435 is subject to Phosphothreonine. A phosphoserine mark is found at S436, S439, and S442.

Belongs to the mab-21 family.

Functionally, probable nucleotidyltransferase that catalyzes the formation of cyclic dinucleotide second messenger in response to some unknown stimulus. The chain is Nucleotidyltransferase MB21D2 from Homo sapiens (Human).